A 309-amino-acid polypeptide reads, in one-letter code: CDK-activating kinase assembly factor MAT1 (309 aa).

Position 1 is an N-acetylmethionine (M1). Residues 6–50 (CPRCKTTKYRNPSLKLMVNVCGHTLCESCVDLLFVRGAGNCPECG) form an RING-type zinc finger. Residue T51 is modified to Phosphothreonine. One can recognise a UIM domain in the interval 142 to 161 (REQEELEEALEVERQEHEQR). The residue at position 279 (S279) is a Phosphoserine.

As to quaternary structure, associates primarily with CDK7 and cyclin H to form the CAK complex. CAK can further associate with the core-TFIIH to form the TFIIH basal transcription factor.

The protein resides in the nucleus. Functionally, stabilizes the cyclin H-CDK7 complex to form a functional CDK-activating kinase (CAK) enzymatic complex. CAK activates the cyclin-associated kinases CDK1, CDK2, CDK4 and CDK6 by threonine phosphorylation. CAK complexed to the core-TFIIH basal transcription factor activates RNA polymerase II by serine phosphorylation of the repetitive C-terminal domain (CTD) of its large subunit (POLR2A), allowing its escape from the promoter and elongation of the transcripts. Involved in cell cycle control and in RNA transcription by RNA polymerase II. The sequence is that of CDK-activating kinase assembly factor MAT1 (Mnat1) from Mus musculus (Mouse).